Reading from the N-terminus, the 214-residue chain is Orotate phosphoribosyltransferase (214 aa).

5-phospho-alpha-D-ribose 1-diphosphate contacts are provided by residues arginine 125, lysine 126, lysine 129, histidine 131, and 151-159 (EDTSTTGNS). Residues threonine 155 and arginine 183 each contribute to the orotate site.

The protein belongs to the purine/pyrimidine phosphoribosyltransferase family. PyrE subfamily. In terms of assembly, homodimer. Mg(2+) serves as cofactor.

The enzyme catalyses orotidine 5'-phosphate + diphosphate = orotate + 5-phospho-alpha-D-ribose 1-diphosphate. It participates in pyrimidine metabolism; UMP biosynthesis via de novo pathway; UMP from orotate: step 1/2. Its function is as follows. Catalyzes the transfer of a ribosyl phosphate group from 5-phosphoribose 1-diphosphate to orotate, leading to the formation of orotidine monophosphate (OMP). This is Orotate phosphoribosyltransferase from Tropheryma whipplei (strain TW08/27) (Whipple's bacillus).